We begin with the raw amino-acid sequence, 379 residues long: Queuine tRNA-ribosyltransferase (379 aa).

Asp94 (proton acceptor) is an active-site residue. Substrate-binding positions include 94–98 (DSGGF), Asp148, Gln191, and Gly218. The interval 249 to 255 (GVGSPDA) is RNA binding. The Nucleophile role is filled by Asp268. The tract at residues 273–277 (TRIAR) is RNA binding; important for wobble base 34 recognition. Residues Cys306, Cys308, Cys311, and His337 each coordinate Zn(2+).

Belongs to the queuine tRNA-ribosyltransferase family. Homodimer. Within each dimer, one monomer is responsible for RNA recognition and catalysis, while the other monomer binds to the replacement base PreQ1. It depends on Zn(2+) as a cofactor.

It carries out the reaction 7-aminomethyl-7-carbaguanine + guanosine(34) in tRNA = 7-aminomethyl-7-carbaguanosine(34) in tRNA + guanine. The protein operates within tRNA modification; tRNA-queuosine biosynthesis. In terms of biological role, catalyzes the base-exchange of a guanine (G) residue with the queuine precursor 7-aminomethyl-7-deazaguanine (PreQ1) at position 34 (anticodon wobble position) in tRNAs with GU(N) anticodons (tRNA-Asp, -Asn, -His and -Tyr). Catalysis occurs through a double-displacement mechanism. The nucleophile active site attacks the C1' of nucleotide 34 to detach the guanine base from the RNA, forming a covalent enzyme-RNA intermediate. The proton acceptor active site deprotonates the incoming PreQ1, allowing a nucleophilic attack on the C1' of the ribose to form the product. After dissociation, two additional enzymatic reactions on the tRNA convert PreQ1 to queuine (Q), resulting in the hypermodified nucleoside queuosine (7-(((4,5-cis-dihydroxy-2-cyclopenten-1-yl)amino)methyl)-7-deazaguanosine). This is Queuine tRNA-ribosyltransferase from Staphylococcus aureus (strain bovine RF122 / ET3-1).